We begin with the raw amino-acid sequence, 272 residues long: Undecaprenyl-diphosphatase (272 aa).

A run of 8 helical transmembrane segments spans residues 6–26 (SLLV…LPVS), 45–65 (AKTF…VMFW), 89–109 (LSLI…LVFH), 115–135 (LFNP…LIIA), 156–176 (AFFI…RSGA), 189–209 (YAAS…ATAL), 221–241 (ADLP…LVAI), and 251–271 (ISFI…FAVF).

The protein belongs to the UppP family.

It localises to the cell inner membrane. The enzyme catalyses di-trans,octa-cis-undecaprenyl diphosphate + H2O = di-trans,octa-cis-undecaprenyl phosphate + phosphate + H(+). Functionally, catalyzes the dephosphorylation of undecaprenyl diphosphate (UPP). Confers resistance to bacitracin. The sequence is that of Undecaprenyl-diphosphatase from Cronobacter sakazakii (strain ATCC BAA-894) (Enterobacter sakazakii).